The primary structure comprises 216 residues: Inactive ribonuclease-like protein 10 (216 aa).

Residues 1-26 form the signal peptide; the sequence is MKLNLVQIFFMLLMLLLGLGMGLGLG. Residues 43–65 form a disordered region; it reads EFWSSDSQDKAEATEEGDGTQTT.

Belongs to the pancreatic ribonuclease family. The N-terminus is blocked. Glycosylated.

The protein resides in the secreted. Functionally, secreted proximal epididymal protein required for post-testicular sperm maturation and male fertility. May be involved in sperm adhesion to the egg zona pellucida. Does not have ribonuclease activity. The protein is Inactive ribonuclease-like protein 10 (RNASE10) of Homo sapiens (Human).